We begin with the raw amino-acid sequence, 129 residues long: F(420)H(2) dehydrogenase subunit A (129 aa).

The next 3 membrane-spanning stretches (helical) occupy residues 9–29 (IIDS…MPPM), 64–84 (FNVE…EVLF), and 95–115 (HGIT…LLFG).

Belongs to the complex I subunit 3 family. The FPO complex is composed of at least 13 different subunits. FpoA, FpoH, FpoJ, FpoK, FpoL, FpoM and FpoN proteins constitute the membrane sector of the complex.

Its subcellular location is the cell membrane. The catalysed reaction is methanophenazine + reduced coenzyme F420-(gamma-L-Glu)(n) = dihydromethanophenazine + oxidized coenzyme F420-(gamma-L-Glu)(n) + H(+). In terms of biological role, component of the F(420)H(2) dehydrogenase (FPO complex) which is part of the energy-conserving F(420)H(2):heterodisulfide oxidoreductase system. The membrane-bound electron transfer system of the complex plays an important role in the metabolism of methylotrophic methanogens when the organisms grow on methanol or methylamines. Catalyzes the oxidation of methanophenazine to dihydromethanophenazine. It shuttles electrons from F(420)H(2), via FAD and iron-sulfur (Fe-S) centers, to methanophenazine (an electron carrier in the membrane). It couples the redox reaction to proton translocation (for every two electrons transferred, two hydrogen ions are translocated across the cytoplasmic membrane), and thus conserves the redox energy in a proton gradient. It also catalyzes the oxidation of F(420)H(2) with quinones such as 2,3-dimethyl-1,4-naphthoquinone, 2-methyl-1,4-naphthoquinone and tetramethyl-p-benzoquinone. The protein is F(420)H(2) dehydrogenase subunit A (fpoA) of Methanosarcina mazei (strain ATCC BAA-159 / DSM 3647 / Goe1 / Go1 / JCM 11833 / OCM 88) (Methanosarcina frisia).